The chain runs to 344 residues: MSERKVMTVLNGKTVTPPPIWLMRQAGRYLPEYRETRKSAGSFLDLCYNPELASEVTLQPIRRFGLDAAILFSDILVIPDALHRNVSFSEGKGPAMDPIDISGIEKLDASDVMAHLSPVFETVSRLRTSLPDETTLLGFCGAPWTVATYMIAGHGTPDQAPARLFGYQEPAAMEKLLALLAEVSADYLVAQIDAGADAVQIFDSWAGVLGEKEFEEYAIKPVARIIASVRARRPSAKIIAFAKGAGYLLRDYRRKTGANAIGLDWSVPLSFARDLQKEGPVQGNLDPMLMVAGGKALQDGIDAVLQSLGQGPLIFNLGHGITPQADPENVTRLVQRVRSVGGAG.

Residues 24 to 28 (RQAGR), Phe-43, Asp-74, Tyr-149, Ser-204, and His-319 each bind substrate.

This sequence belongs to the uroporphyrinogen decarboxylase family. As to quaternary structure, homodimer.

The protein localises to the cytoplasm. It catalyses the reaction uroporphyrinogen III + 4 H(+) = coproporphyrinogen III + 4 CO2. Its pathway is porphyrin-containing compound metabolism; protoporphyrin-IX biosynthesis; coproporphyrinogen-III from 5-aminolevulinate: step 4/4. Catalyzes the decarboxylation of four acetate groups of uroporphyrinogen-III to yield coproporphyrinogen-III. In Agrobacterium fabrum (strain C58 / ATCC 33970) (Agrobacterium tumefaciens (strain C58)), this protein is Uroporphyrinogen decarboxylase.